Consider the following 264-residue polypeptide: Probable transcriptional regulatory protein PPA1157 (264 aa).

Belongs to the TACO1 family.

The protein localises to the cytoplasm. The protein is Probable transcriptional regulatory protein PPA1157 of Cutibacterium acnes (strain DSM 16379 / KPA171202) (Propionibacterium acnes).